A 157-amino-acid chain; its full sequence is Protein Smg (157 aa).

The protein belongs to the Smg family.

The chain is Protein Smg from Klebsiella pneumoniae (strain 342).